The following is a 502-amino-acid chain: L-arabinose isomerase (502 aa).

Glu306, Glu333, His350, and His449 together coordinate Mn(2+).

The protein belongs to the arabinose isomerase family. Mn(2+) serves as cofactor.

The catalysed reaction is beta-L-arabinopyranose = L-ribulose. The protein operates within carbohydrate degradation; L-arabinose degradation via L-ribulose; D-xylulose 5-phosphate from L-arabinose (bacterial route): step 1/3. Its function is as follows. Catalyzes the conversion of L-arabinose to L-ribulose. This Flavobacterium johnsoniae (strain ATCC 17061 / DSM 2064 / JCM 8514 / BCRC 14874 / CCUG 350202 / NBRC 14942 / NCIMB 11054 / UW101) (Cytophaga johnsonae) protein is L-arabinose isomerase.